The chain runs to 473 residues: Calcium/calmodulin-dependent protein kinase type IV (473 aa).

A phosphoserine; by autocatalysis mark is found at Ser-12 and Ser-13. A Protein kinase domain is found at 46 to 300 (FEVESELGRG…TFQALQHPWV (255 aa)). Residues 52-60 (LGRGATSIV) and Lys-75 each bind ATP. A glycan (O-linked (GlcNAc) threonine) is linked at Thr-57. An O-linked (GlcNAc) serine glycan is attached at Ser-58. O-linked (GlcNAc) serine glycosylation is present at Ser-137. Asp-164 acts as the Proton acceptor in catalysis. Ser-189 carries an O-linked (GlcNAc) serine glycan. Thr-200 is subject to Phosphothreonine; by CaMKK1 and CaMKK2. The autoinhibitory domain stretch occupies residues 305 to 321 (ANFVHMDTAQKKLQEFN). The interval 306–323 (NFVHMDTAQKKLQEFNAR) is PP2A-binding. The interval 322–341 (ARRKLKAAVKAVVASSRLGS) is calmodulin-binding. Ser-336 is subject to Phosphoserine; by autocatalysis. At Ser-341 the chain carries Phosphoserine. Residues 341–350 (SASSSHGSIQ) are compositionally biased toward low complexity. Disordered regions lie at residues 341–368 (SASS…GNED) and 445–473 (EEAA…LPEY). O-linked (GlcNAc) serine glycosylation is found at Ser-344, Ser-345, and Ser-356. At Ser-360 the chain carries Phosphoserine.

Belongs to the protein kinase superfamily. CAMK Ser/Thr protein kinase family. CaMK subfamily. In terms of assembly, monomer. Interacts with protein phosphatase 2A (PPP2CA/PPP2CB); the interaction is mutually exclusive with binding to Ca(2+)/calmodulin. In terms of processing, phosphorylated by CaMKK1 and CaMKK2 on Thr-200. Dephosphorylated by protein phosphatase 2A. Autophosphorylated on Ser-12 and Ser-13. Glycosylation at Ser-189 modulates the phosphorylation of CaMK4 at Thr-200 and negatively regulates its activity toward CREB1 in basal conditions and during early inomycin stimulation. Expressed in brain, thymus, CD4 T-cells, testis and epithelial ovarian cancer tissue.

It localises to the cytoplasm. The protein resides in the nucleus. It catalyses the reaction L-seryl-[protein] + ATP = O-phospho-L-seryl-[protein] + ADP + H(+). The catalysed reaction is L-threonyl-[protein] + ATP = O-phospho-L-threonyl-[protein] + ADP + H(+). Activated by Ca(2+)/calmodulin. Binding of calmodulin results in conformational change that relieves intrasteric autoinhibition and allows phosphorylation of Thr-200 within the activation loop by CaMKK1 or CaMKK2. Phosphorylation of Thr-200 results in a 10-20-fold increase in total activity to generate Ca(2+)/calmodulin-independent activity. Autophosphorylation of the N-terminus Ser-12 and Ser-13 is required for full activation. Inactivated by protein phosphatase 2A (PPP2CA/PPP2CB) which dephosphorylates Thr-200, thereby terminating autonomous activity and helping to maintain the enzyme in its autoinhibited state. Functionally, calcium/calmodulin-dependent protein kinase that operates in the calcium-triggered CaMKK-CaMK4 signaling cascade and regulates, mainly by phosphorylation, the activity of several transcription activators, such as CREB1, MEF2D, JUN and RORA, which play pivotal roles in immune response, inflammation, and memory consolidation. In the thymus, regulates the CD4(+)/CD8(+) double positive thymocytes selection threshold during T-cell ontogeny. In CD4 memory T-cells, is required to link T-cell antigen receptor (TCR) signaling to the production of IL2, IFNG and IL4 (through the regulation of CREB and MEF2). Regulates the differentiation and survival phases of osteoclasts and dendritic cells (DCs). Mediates DCs survival by linking TLR4 and the regulation of temporal expression of BCL2. Phosphorylates the transcription activator CREB1 on 'Ser-133' in hippocampal neuron nuclei and contribute to memory consolidation and long term potentiation (LTP) in the hippocampus. Can activate the MAP kinases MAPK1/ERK2, MAPK8/JNK1 and MAPK14/p38 and stimulate transcription through the phosphorylation of ELK1 and ATF2. Can also phosphorylate in vitro CREBBP, PRM2, MEF2A and STMN1/OP18. This Homo sapiens (Human) protein is Calcium/calmodulin-dependent protein kinase type IV (CAMK4).